The sequence spans 422 residues: Glycerol-3-phosphate dehydrogenase [NAD(+)] 2 (422 aa).

NAD(+)-binding positions include 69–74, phenylalanine 157, lysine 180, and alanine 213; that span reads GSGNWG. Residue lysine 180 coordinates substrate. The active-site Proton acceptor is the lysine 273. 2 residues coordinate NAD(+): arginine 338 and glutamine 367. A substrate-binding site is contributed by 338-339; it reads RN.

This sequence belongs to the NAD-dependent glycerol-3-phosphate dehydrogenase family.

The catalysed reaction is sn-glycerol 3-phosphate + NAD(+) = dihydroxyacetone phosphate + NADH + H(+). The sequence is that of Glycerol-3-phosphate dehydrogenase [NAD(+)] 2 (GPD2) from Candida glabrata (strain ATCC 2001 / BCRC 20586 / JCM 3761 / NBRC 0622 / NRRL Y-65 / CBS 138) (Yeast).